A 103-amino-acid chain; its full sequence is Nucleoid-associated protein NIS_0256 (103 aa).

Belongs to the YbaB/EbfC family. In terms of assembly, homodimer.

Its subcellular location is the cytoplasm. It is found in the nucleoid. In terms of biological role, binds to DNA and alters its conformation. May be involved in regulation of gene expression, nucleoid organization and DNA protection. The protein is Nucleoid-associated protein NIS_0256 of Nitratiruptor sp. (strain SB155-2).